We begin with the raw amino-acid sequence, 338 residues long: DNA-directed RNA polymerase subunit alpha (338 aa).

The tract at residues 1-234 is alpha N-terminal domain (alpha-NTD); it reads MIQKNWQELI…DQLNVFVNFE (234 aa). Positions 250–338 are alpha C-terminal domain (alpha-CTD); the sequence is FNPALLKKVD…ELAKRFEEHY (89 aa).

Belongs to the RNA polymerase alpha chain family. In terms of assembly, homodimer. The RNAP catalytic core consists of 2 alpha, 1 beta, 1 beta' and 1 omega subunit. When a sigma factor is associated with the core the holoenzyme is formed, which can initiate transcription.

The catalysed reaction is RNA(n) + a ribonucleoside 5'-triphosphate = RNA(n+1) + diphosphate. Its function is as follows. DNA-dependent RNA polymerase catalyzes the transcription of DNA into RNA using the four ribonucleoside triphosphates as substrates. The polypeptide is DNA-directed RNA polymerase subunit alpha (Beijerinckia indica subsp. indica (strain ATCC 9039 / DSM 1715 / NCIMB 8712)).